We begin with the raw amino-acid sequence, 491 residues long: Cytochrome P450 2F2 (491 aa).

Cys-436 lines the heme pocket.

This sequence belongs to the cytochrome P450 family. The cofactor is heme. As to expression, club cells in lung and liver.

It is found in the endoplasmic reticulum membrane. The protein localises to the microsome membrane. In terms of biological role, involved in the regio- and stereoselective transformation of naphthalene to trans-1R-hydroxy-2R-glutathionyl-1,2-dihydronaphthalene in the presence of glutathione and glutathione S-transferases. It specifically catalyzes the production of a very reactive and potentially toxic intermediate, the 2R,2S arene oxide, that is associated with necrosis of the unciliated bronchiolar epithelial cells or club cells in lung. The sequence is that of Cytochrome P450 2F2 (Cyp2f2) from Mus musculus (Mouse).